The sequence spans 258 residues: Translocon-associated protein subunit alpha (258 aa).

The N-terminal stretch at 1 to 24 (MMNLRVLFLALLLLASPLLQVARC) is a signal peptide. The Lumenal segment spans residues 25–190 (QSDAEDHSSL…ESGGLLSGES (166 aa)). Asparagine 57, asparagine 119, and asparagine 127 each carry an N-linked (GlcNAc...) asparagine glycan. The chain crosses the membrane as a helical span at residues 191–209 (VFLLTLGIGLLLLLGLWAY). Residues 210–258 (SQVQRLTKKTKKVSKVEVGTRSTEASLDEWLEGTTLAKTSSGKTKNKKN) are Cytoplasmic-facing.

The protein belongs to the TRAP-alpha family. In terms of assembly, heterotetramer of TRAP-alpha, TRAP-beta, TRAP-delta and TRAP-gamma. Post-translationally, phosphorylated in its cytoplasmic tail.

The protein resides in the endoplasmic reticulum membrane. Its function is as follows. TRAP proteins are part of a complex whose function is to bind calcium to the ER membrane and thereby regulate the retention of ER resident proteins. May be involved in the recycling of the translocation apparatus after completion of the translocation process or may function as a membrane-bound chaperone facilitating folding of translocated proteins. This chain is Translocon-associated protein subunit alpha, found in Arabidopsis thaliana (Mouse-ear cress).